We begin with the raw amino-acid sequence, 843 residues long: Respiratory burst oxidase homolog protein B (843 aa).

Residues 1-10 (MREEEMESSS) show a composition bias toward acidic residues. Residues 1–27 (MREEEMESSSEGETNKISRCKATGSDN) form a disordered region. Topologically, residues 1–297 (MREEEMESSS…SYFFLENWKR (297 aa)) are cytoplasmic. EF-hand-like regions lie at residues 114-122 (AVEGKLPKS) and 148-159 (RGTTSSSITKTE). EF-hand domains lie at 171 to 206 (SFDD…SASA) and 215 to 250 (NVDE…VPSQ). Residues D184, N186, D188, R190, and E195 each coordinate Ca(2+). Residue S268 is modified to Phosphoserine. The chain crosses the membrane as a helical span at residues 298 to 318 (IWVLTLWISICITLFTWKFLQ). Residues 319-383 (YKRKTVFEVM…FDDNINFHKV (65 aa)) lie on the Extracellular side of the membrane. Residues 336–495 (KGSAETLKFN…LFVIVYVLLI (160 aa)) enclose the Ferric oxidoreductase domain. A helical membrane pass occupies residues 384 to 404 (VAFGIAVGIGLHAISHLACDF). The Cytoplasmic portion of the chain corresponds to 405–439 (PRLLHAKNVEFEPMKKFFGDERPENYGWFMKGTDG). The chain crosses the membrane as a helical span at residues 440 to 460 (WTGVTMVVLMLVAYVLAQSWF). At 461–482 (RRNRANLPKSLKRLTGFNAFWY) the chain is on the extracellular side. Residues 483-503 (SHHLFVIVYVLLIVHGYFVYL) form a helical membrane-spanning segment. At 504–511 (SKEWYHKT) the chain is on the cytoplasmic side. Residues 512-529 (TWMYLAVPVLLYAFERLI) form a helical membrane-spanning segment. The Extracellular segment spans residues 530–659 (RAFRPGAKAV…PYGAPAQDYR (130 aa)). The region spanning 534–657 (PGAKAVKVLK…DGPYGAPAQD (124 aa)) is the FAD-binding FR-type domain. A helical transmembrane segment spans residues 660–680 (NYDVLLLVGLGIGATPLISII). Residues 681–843 (RDVLNNIKNQ…TKFEFHKENF (163 aa)) are Cytoplasmic-facing.

It belongs to the RBOH (TC 5.B.1.3) family. In terms of assembly, monomer and homodimer.

It localises to the membrane. Functionally, calcium-dependent NADPH oxidase that generates superoxide. The polypeptide is Respiratory burst oxidase homolog protein B (RBOHB) (Arabidopsis thaliana (Mouse-ear cress)).